Here is a 315-residue protein sequence, read N- to C-terminus: Protein rlx (315 aa).

The segment at 263–315 (TEQLKQRRVERAQETKQAHSKISSRDTRESENQRERAKGNNIRIERGDEGLSR) is disordered.

Functionally, this protein is probably required for relaxation complex formation and plasmid mobilization by conjugative plasmids. The sequence is that of Protein rlx (rlx) from Staphylococcus aureus.